A 79-amino-acid polypeptide reads, in one-letter code: SVVAHMGIVLSGLMTLTMWGISGSYTLMIAHGLCSSGLFCLANISYERMGSRSLLINKGLLNFMPSLSLWWFLLCSSNM.

2 helical membrane-spanning segments follow: residues 24–44 and 54–74; these read SYTLMIAHGLCSSGLFCLANI and LLINKGLLNFMPSLSLWWFLL.

The protein belongs to the complex I subunit 4 family.

Its subcellular location is the mitochondrion membrane. The catalysed reaction is a ubiquinone + NADH + 5 H(+)(in) = a ubiquinol + NAD(+) + 4 H(+)(out). Functionally, core subunit of the mitochondrial membrane respiratory chain NADH dehydrogenase (Complex I) that is believed to belong to the minimal assembly required for catalysis. Complex I functions in the transfer of electrons from NADH to the respiratory chain. The immediate electron acceptor for the enzyme is believed to be ubiquinone. The chain is NADH-ubiquinone oxidoreductase chain 4 (ND4) from Simulium vittatum (Striped black fly).